We begin with the raw amino-acid sequence, 316 residues long: Methionyl-tRNA formyltransferase (316 aa).

Position 112 to 115 (112 to 115 (GLLP)) interacts with (6S)-5,6,7,8-tetrahydrofolate.

The protein belongs to the Fmt family.

The catalysed reaction is L-methionyl-tRNA(fMet) + (6R)-10-formyltetrahydrofolate = N-formyl-L-methionyl-tRNA(fMet) + (6S)-5,6,7,8-tetrahydrofolate + H(+). Its function is as follows. Attaches a formyl group to the free amino group of methionyl-tRNA(fMet). The formyl group appears to play a dual role in the initiator identity of N-formylmethionyl-tRNA by promoting its recognition by IF2 and preventing the misappropriation of this tRNA by the elongation apparatus. The chain is Methionyl-tRNA formyltransferase from Chlamydia muridarum (strain MoPn / Nigg).